Here is a 252-residue protein sequence, read N- to C-terminus: F-box/SPRY domain-containing protein 1 (252 aa).

The F-box domain maps to 1 to 48 (MVDPLCNYNVLESIFSYLELNDLNRCSQVCKSWYHFLNDENSDVWRWH). Residues 58–250 (VKSDLLSSVT…VSMVYLGTPL (193 aa)) enclose the B30.2/SPRY domain.

It belongs to the FBXO45/Fsn family. Component of an E3 ubiquitin ligase complex composed of hiw and Fsn.

Its subcellular location is the synapse. Its pathway is protein modification; protein ubiquitination. Required in the presynaptic motoneuron to down-regulate the levels of wnd and restrain synaptic terminal growth at the neuromuscular junction (NMJ). The chain is F-box/SPRY domain-containing protein 1 from Drosophila grimshawi (Hawaiian fruit fly).